The chain runs to 322 residues: Endochitinase CH25 (322 aa).

An N-terminal signal peptide occupies residues 1–20 (MKSCLLLFLIFSFLLSFSLA). The Chitin-binding type-1 domain maps to 21-62 (EQCGRQAGGALCPNGLCCSEFGWCGDTEAYCKQPGCQSQCGG). 7 disulfides stabilise this stretch: Cys-23-Cys-38, Cys-32-Cys-44, Cys-37-Cys-51, Cys-56-Cys-60, Cys-92-Cys-154, Cys-166-Cys-174, and Cys-273-Cys-305. Glu-136 serves as the catalytic Proton donor.

The protein belongs to the glycosyl hydrolase 19 family. Chitinase class I subfamily. High expression in roots, moderate in floral tissues and low in stems and leaves.

The enzyme catalyses Random endo-hydrolysis of N-acetyl-beta-D-glucosaminide (1-&gt;4)-beta-linkages in chitin and chitodextrins.. In Brassica napus (Rape), this protein is Endochitinase CH25.